Consider the following 26-residue polypeptide: Alpha-amylase inhibitor 1 (26 aa).

It belongs to the protease inhibitor I6 (cereal trypsin/alpha-amylase inhibitor) family.

Its subcellular location is the secreted. Its function is as follows. Alpha-amylase inhibitor. This is Alpha-amylase inhibitor 1 from Saussurea costus (Costus).